The chain runs to 193 residues: Protein SINE3 (193 aa).

The tract at residues 15–35 is disordered; it reads SELGAKRLKDPEMKNRKVTTE. A compositionally biased stretch (basic and acidic residues) spans 18 to 35; the sequence is GAKRLKDPEMKNRKVTTE. One can recognise a KASH domain in the interval 155–193; sequence VTVKFRIVLLSFILWAILAAIVVFFSSGEERAYRGPLPT. A helical transmembrane segment spans residues 161-181; that stretch reads IVLLSFILWAILAAIVVFFSS. A Required for nuclear localization motif is present at residues 190–193; that stretch reads PLPT.

In terms of assembly, interacts with SUN1 and SUN2.

The protein resides in the nucleus membrane. The polypeptide is Protein SINE3 (Arabidopsis thaliana (Mouse-ear cress)).